Here is a 1367-residue protein sequence, read N- to C-terminus: Mediator of RNA polymerase II transcription subunit 23 (1367 aa).

Residues 1343-1367 (PPQALNSGSPAPQSNQVPASLPVTQ) form a disordered region. Positions 1346-1367 (ALNSGSPAPQSNQVPASLPVTQ) are enriched in polar residues.

The protein belongs to the Mediator complex subunit 23 family. In terms of assembly, component of the Mediator complex, which is composed of MED1, MED4, MED6, MED7, MED8, MED9, MED10, MED11, MED12, MED13, MED13L, MED14, MED15, MED16, MED17, MED18, MED19, MED20, MED21, MED22, MED23, MED24, MED25, MED26, MED27, MED29, MED30, MED31, CCNC, CDK8 and CDC2L6/CDK11. The MED12, MED13, CCNC and CDK8 subunits form a distinct module termed the CDK8 module. Mediator containing the CDK8 module is less active than Mediator lacking this module in supporting transcriptional activation. Individual preparations of the Mediator complex lacking one or more distinct subunits have been variously termed ARC, CRSP, DRIP, PC2, SMCC and TRAP. Interacts with CEBPB (when not methylated), CTNNB1, and GLI3. Interacts with CDK8 and ELK1.

The protein localises to the nucleus. In terms of biological role, component of the Mediator complex, a coactivator involved in the regulated transcription of nearly all RNA polymerase II-dependent genes. Mediator functions as a bridge to convey information from gene-specific regulatory proteins to the basal RNA polymerase II transcription machinery. Mediator is recruited to promoters by direct interactions with regulatory proteins and serves as a scaffold for the assembly of a functional pre-initiation complex with RNA polymerase II and the general transcription factors. Also required for transcriptional activation subsequent to the assembly of the pre-initiation complex. Required for transcriptional activation by adenovirus E1A protein. Required for ELK1-dependent transcriptional activation in response to activated Ras signaling. The protein is Mediator of RNA polymerase II transcription subunit 23 (Med23) of Mus musculus (Mouse).